The primary structure comprises 375 residues: Trichodiene synthase (375 aa).

It belongs to the trichodiene synthase family.

It carries out the reaction (2E,6E)-farnesyl diphosphate = trichodiene + diphosphate. It participates in sesquiterpene biosynthesis; trichothecene biosynthesis. In terms of biological role, TS is a member of the terpene cyclase group of enzymes. It catalyzes the isomerization and cyclization of farnesyl pyro-phosphate to form trichodiene, the first cyclic intermediate in the biosynthetic pathway for trichothecenes. It serves to branch trichothecene biosynthesis from the isoprenoid pathway. The protein is Trichodiene synthase (TRI5) of Fusarium cerealis (Fusarium crookwellense).